The following is a 500-amino-acid chain: MINAQEISALLKQQIEGFQPDFDYTETGVVTYIGDGIARAQGLDNAMSGELLVFENGTIGMAQNLETNDVGIIILGQFTDIREGSVVRRTGKIMEVPVGSALIGRVINPLGQPVDGLGEIRTSKTRPIEYPAPGVMQRKSVNEPLQTGLKAIDALVPIGRGQRELIIGDRQTGKTSVAIDAILNQKGQDMICIYVAIGQKESTVRTQVETLRQYGALDYTIVVTASASQPSPLLFLAPYAGVAMAEEFMYEGKHVLIVYDDLSKQAVAYRELSLLLRRPPGREAYPGDVFYLHSRLLERSAKVSDELGGGSITALPFIETQAGDISAYIATNVISITDGQIFLKDDLFNSGIRPAIDAGSSVSRVGGSAQIKAMKKVAGTLRIDLASYRELEAFTQFGSDLDAATQAKLNRGRRTVEVLKQPLHKPLPVEKQVLILYALTNGFLDSVPIDDILAFEEELYAYFDLHYDGLLDVIRTTKDLPDTDELNAAIQAFKDQSVFK.

Position 168 to 175 (168 to 175) interacts with ATP; the sequence is GDRQTGKT.

It belongs to the ATPase alpha/beta chains family. F-type ATPases have 2 components, CF(1) - the catalytic core - and CF(0) - the membrane proton channel. CF(1) has five subunits: alpha(3), beta(3), gamma(1), delta(1), epsilon(1). CF(0) has three main subunits: a(1), b(2) and c(9-12). The alpha and beta chains form an alternating ring which encloses part of the gamma chain. CF(1) is attached to CF(0) by a central stalk formed by the gamma and epsilon chains, while a peripheral stalk is formed by the delta and b chains.

It is found in the cell membrane. It carries out the reaction ATP + H2O + 4 H(+)(in) = ADP + phosphate + 5 H(+)(out). Its function is as follows. Produces ATP from ADP in the presence of a proton gradient across the membrane. The alpha chain is a regulatory subunit. In Streptococcus suis (strain 98HAH33), this protein is ATP synthase subunit alpha.